Reading from the N-terminus, the 89-residue chain is Mitochondrial import inner membrane translocase subunit Tim9 (89 aa).

Ala-2 bears the N-acetylalanine mark. A Twin CX3C motif motif is present at residues 28 to 52 (CFLDCVKDFTTREVKPEEVTCSEHC). Cystine bridges form between Cys-28–Cys-52 and Cys-32–Cys-48.

The protein belongs to the small Tim family. Heterohexamer; composed of 3 copies of TIMM9 and 3 copies of TIMM10/TIM10A, named soluble 70 kDa complex. The complex forms a 6-bladed alpha-propeller structure and associates with the TIMM22 component of the TIM22 complex. Interacts with multi-pass transmembrane proteins in transit. Also forms a complex composed of TIMM9, TIMM10/TIM10A and FXC1/TIM10B.

It is found in the mitochondrion inner membrane. Its function is as follows. Mitochondrial intermembrane chaperone that participates in the import and insertion of multi-pass transmembrane proteins into the mitochondrial inner membrane. May also be required for the transfer of beta-barrel precursors from the TOM complex to the sorting and assembly machinery (SAM complex) of the outer membrane. Acts as a chaperone-like protein that protects the hydrophobic precursors from aggregation and guide them through the mitochondrial intermembrane space. In Mus musculus (Mouse), this protein is Mitochondrial import inner membrane translocase subunit Tim9 (Timm9).